A 544-amino-acid polypeptide reads, in one-letter code: CTP synthase (544 aa).

The amidoligase domain stretch occupies residues 1-266 (MTRFVFITGG…DREVLRHFNL (266 aa)). CTP is bound at residue Ser-13. Position 13 (Ser-13) interacts with UTP. An ATP-binding site is contributed by 14-19 (SLGKGI). L-glutamine is bound at residue Tyr-54. Asp-71 contributes to the ATP binding site. The Mg(2+) site is built by Asp-71 and Glu-140. Residues 147-149 (DIE), 187-192 (KTKPTQ), and Lys-223 each bind CTP. Residues 187-192 (KTKPTQ) and Lys-223 each bind UTP. A Glutamine amidotransferase type-1 domain is found at 292 to 543 (KIAIVGKYIT…VAAAVRQARL (252 aa)). L-glutamine is bound at residue Gly-354. Cys-381 functions as the Nucleophile; for glutamine hydrolysis in the catalytic mechanism. L-glutamine is bound by residues 382–385 (FGMQ), Glu-405, and Arg-471. Active-site residues include His-516 and Glu-518.

This sequence belongs to the CTP synthase family. As to quaternary structure, homotetramer.

The catalysed reaction is UTP + L-glutamine + ATP + H2O = CTP + L-glutamate + ADP + phosphate + 2 H(+). The enzyme catalyses L-glutamine + H2O = L-glutamate + NH4(+). It carries out the reaction UTP + NH4(+) + ATP = CTP + ADP + phosphate + 2 H(+). Its pathway is pyrimidine metabolism; CTP biosynthesis via de novo pathway; CTP from UDP: step 2/2. With respect to regulation, allosterically activated by GTP, when glutamine is the substrate; GTP has no effect on the reaction when ammonia is the substrate. The allosteric effector GTP functions by stabilizing the protein conformation that binds the tetrahedral intermediate(s) formed during glutamine hydrolysis. Inhibited by the product CTP, via allosteric rather than competitive inhibition. Catalyzes the ATP-dependent amination of UTP to CTP with either L-glutamine or ammonia as the source of nitrogen. Regulates intracellular CTP levels through interactions with the four ribonucleotide triphosphates. This chain is CTP synthase, found in Granulibacter bethesdensis (strain ATCC BAA-1260 / CGDNIH1).